A 253-amino-acid polypeptide reads, in one-letter code: NAD-dependent protein deacetylase (253 aa).

The Deacetylase sirtuin-type domain occupies 3–253 (APSLSSGVEQ…GETLGPFVGN (251 aa)). NAD(+) contacts are provided by Ala-29, Thr-33, Phe-40, Arg-41, Gln-106, Ile-108, Asp-109, and His-126. Phe-40 provides a ligand contact to nicotinamide. Nicotinamide contacts are provided by Ile-108 and Asp-109. His-126 (proton acceptor) is an active-site residue. Zn(2+) is bound by residues Cys-134, Cys-137, Cys-159, and Cys-162. NAD(+) is bound by residues Ser-200, Ser-201, Asn-225, Asp-242, and Ile-243.

The protein belongs to the sirtuin family. Class U subfamily. The cofactor is Zn(2+).

It is found in the cytoplasm. It carries out the reaction N(6)-acetyl-L-lysyl-[protein] + NAD(+) + H2O = 2''-O-acetyl-ADP-D-ribose + nicotinamide + L-lysyl-[protein]. In terms of biological role, NAD-dependent protein deacetylase which modulates the activities of several enzymes which are inactive in their acetylated form. The protein is NAD-dependent protein deacetylase of Rhodopseudomonas palustris (strain ATCC BAA-98 / CGA009).